The following is an 81-amino-acid chain: ATP synthase subunit c (81 aa).

The next 2 helical transmembrane spans lie at 7–27 (AASV…PGLG) and 57–77 (LAFM…LLFA).

It belongs to the ATPase C chain family. F-type ATPases have 2 components, F(1) - the catalytic core - and F(0) - the membrane proton channel. F(1) has five subunits: alpha(3), beta(3), gamma(1), delta(1), epsilon(1). F(0) has four main subunits: a(1), b(1), b'(1) and c(10-14). The alpha and beta chains form an alternating ring which encloses part of the gamma chain. F(1) is attached to F(0) by a central stalk formed by the gamma and epsilon chains, while a peripheral stalk is formed by the delta, b and b' chains.

It is found in the cellular thylakoid membrane. Functionally, f(1)F(0) ATP synthase produces ATP from ADP in the presence of a proton or sodium gradient. F-type ATPases consist of two structural domains, F(1) containing the extramembraneous catalytic core and F(0) containing the membrane proton channel, linked together by a central stalk and a peripheral stalk. During catalysis, ATP synthesis in the catalytic domain of F(1) is coupled via a rotary mechanism of the central stalk subunits to proton translocation. Its function is as follows. Key component of the F(0) channel; it plays a direct role in translocation across the membrane. A homomeric c-ring of between 10-14 subunits forms the central stalk rotor element with the F(1) delta and epsilon subunits. The protein is ATP synthase subunit c of Synechococcus sp. (strain JA-3-3Ab) (Cyanobacteria bacterium Yellowstone A-Prime).